The sequence spans 1436 residues: Pleiotropic drug resistance protein 1 (1436 aa).

Positions 165-438 (LDSIHILPSK…FESMGFKCPE (274 aa)) constitute an ABC transporter 1 domain. An ATP-binding site is contributed by 198–205 (GPPGSGKT). In terms of domain architecture, ABC transmembrane type-2 1 spans 516–729 (QLLKVCTERE…SVNAILVNEF (214 aa)). The next 7 membrane-spanning stretches (helical) occupy residues 534-554 (FVYLFKFFQLLIIALMTMTIF), 567-587 (GGIYSGALFFVVIMIMFNGLS), 622-642 (IPVTFAEVGMWVFLTYYVMGF), 653-673 (FLLLLLVNQMASALFRFIAAV), 679-699 (VASTFGAFALLLQFALGGFIL), 707-727 (WWIWGYWTSPLMYSVNAILVN), and 764-784 (IGVGALAGFIVMFNIAYSVAL). Residues 796–826 (TISDESENNESESSPQITSTQEGDSASENKK) are disordered. A compositionally biased stretch (polar residues) spans 810–821 (PQITSTQEGDSA). The region spanning 838-1090 (ITFDEVVYSV…HLIKYFESIP (253 aa)) is the ABC transporter 2 domain. 883–890 (GVSGAGKT) lines the ATP pocket. An ABC transmembrane type-2 2 domain is found at 1163-1377 (TQCMACLWKQ…TLYGLVASQF (215 aa)). 7 helical membrane passes run 1184 to 1204 (AVRLIFTTFIALIFGTMFWDI), 1214 to 1234 (LVNAMGSMYAAVLFLGVQNSS), 1270 to 1290 (IPYIFVQATVYGLIVYSMIGF), 1301 to 1321 (FFFMFFTFLYFTFFGMMTVAV), 1327 to 1347 (VASIVAGFFYTVWNLFSGFIV), 1358 to 1378 (WYYWGCPIAWTLYGLVASQFG), and 1408 to 1428 (VVAAVIVAFAVVFAFTFALGI).

The protein belongs to the ABC transporter superfamily. ABCG family. PDR (TC 3.A.1.205) subfamily. In terms of tissue distribution, roots, petals and leaf epidermis, where it is confined to glandular trichomes (at protein level).

It is found in the cell membrane. In terms of biological role, excretes secondary metabolites such as terpenes. Involved in both constitutive and jasmonic acid-dependent induced defense. Confers some resistance to sclareol and B.cinerea. The sequence is that of Pleiotropic drug resistance protein 1 (PDR1) from Nicotiana plumbaginifolia (Leadwort-leaved tobacco).